The primary structure comprises 437 residues: Xylose isomerase (437 aa).

Residues H102 and D105 contribute to the active site. E233, E269, H272, D297, D308, D310, and D340 together coordinate Mg(2+).

It belongs to the xylose isomerase family. As to quaternary structure, homotetramer. It depends on Mg(2+) as a cofactor.

It localises to the cytoplasm. It catalyses the reaction alpha-D-xylose = alpha-D-xylulofuranose. The chain is Xylose isomerase from Novosphingobium aromaticivorans (strain ATCC 700278 / DSM 12444 / CCUG 56034 / CIP 105152 / NBRC 16084 / F199).